A 300-amino-acid chain; its full sequence is FeMo cofactor biosynthesis protein NifB (300 aa).

The Radical SAM core domain occupies 24–266 (HDKVGRVHLP…PQFRACGQCR (243 aa)). [4Fe-4S] cluster contacts are provided by Cys38, Cys42, and Cys45. S-adenosyl-L-methionine is bound by residues Gly93, Thr144, and Ile196. Positions 262 and 265 each coordinate [4Fe-4S] cluster.

The protein belongs to the radical SAM superfamily. NifB family. Monomer. Requires [4Fe-4S] cluster as cofactor.

Its pathway is cofactor biosynthesis; Fe-Mo cofactor biosynthesis. Its function is as follows. Involved in the biosynthesis of the iron-molybdenum cofactor (FeMo-co or M-cluster) found in the dinitrogenase enzyme of the nitrogenase complex in nitrogen-fixing microorganisms. NifB catalyzes the crucial step of radical SAM-dependent carbide insertion that occurs concomitant with the insertion of a 9th sulfur and the rearrangement/coupling of two [4Fe-4S] clusters into a [8Fe-9S-C] cluster, the precursor to the M-cluster. The sequence is that of FeMo cofactor biosynthesis protein NifB from Methanocaldococcus jannaschii (strain ATCC 43067 / DSM 2661 / JAL-1 / JCM 10045 / NBRC 100440) (Methanococcus jannaschii).